The sequence spans 414 residues: Argininosuccinate synthase (414 aa).

12 to 20 (AYSGGLDTS) serves as a coordination point for ATP. L-citrulline is bound by residues Tyr-90 and Ser-95. An ATP-binding site is contributed by Gly-120. L-aspartate is bound by residues Thr-122, Asn-126, and Asp-127. Asn-126 serves as a coordination point for L-citrulline. L-citrulline is bound by residues Arg-130, Ser-179, Ser-188, Glu-264, and Tyr-276.

The protein belongs to the argininosuccinate synthase family. Type 1 subfamily. As to quaternary structure, homotetramer.

It is found in the cytoplasm. The catalysed reaction is L-citrulline + L-aspartate + ATP = 2-(N(omega)-L-arginino)succinate + AMP + diphosphate + H(+). It participates in amino-acid biosynthesis; L-arginine biosynthesis; L-arginine from L-ornithine and carbamoyl phosphate: step 2/3. This Alkaliphilus metalliredigens (strain QYMF) protein is Argininosuccinate synthase.